A 298-amino-acid polypeptide reads, in one-letter code: UTP--glucose-1-phosphate uridylyltransferase (298 aa).

It belongs to the UDPGP type 2 family.

The catalysed reaction is alpha-D-glucose 1-phosphate + UTP + H(+) = UDP-alpha-D-glucose + diphosphate. Its pathway is carbohydrate metabolism; nucleotide-sugar metabolism. The protein operates within capsule biogenesis; capsule polysaccharide biosynthesis. The sequence is that of UTP--glucose-1-phosphate uridylyltransferase (galF) from Klebsiella pneumoniae.